Here is a 118-residue protein sequence, read N- to C-terminus: MKIVALTLVAFVALAGASCPYAAPAPAYPAPAAPSGYPAPPCPTNYLFSCQPNLAPAPCAQEAQAPAYGSAGAYTEQVPHYVGSPNREQVQQFHQRIGMAALMEELRGLGQGIQGQQY.

The signal sequence occupies residues 1 to 17 (MKIVALTLVAFVALAGA). Positions 36–75 (GYPAPPCPTNYLFSCQPNLAPAPCAQEAQAPAYGSAGAYT) constitute a VM domain.

The protein belongs to the vitelline membrane family.

It localises to the secreted. In terms of biological role, major early eggshell protein. The chain is Vitelline membrane protein Vm32E from Drosophila simulans (Fruit fly).